The following is a 149-amino-acid chain: Large ribosomal subunit protein bL9 (149 aa).

It belongs to the bacterial ribosomal protein bL9 family.

Functionally, binds to the 23S rRNA. The polypeptide is Large ribosomal subunit protein bL9 (Persephonella marina (strain DSM 14350 / EX-H1)).